Here is a 156-residue protein sequence, read N- to C-terminus: Snaclec A14 (156 aa).

Positions methionine 1 to alanine 23 are cleaved as a signal peptide. 3 disulfide bridges follow: cysteine 27-cysteine 38, cysteine 55-cysteine 152, and cysteine 127-cysteine 144. The 120-residue stretch at tyrosine 34–lysine 153 folds into the C-type lectin domain. N-linked (GlcNAc...) asparagine glycosylation occurs at asparagine 141.

This sequence belongs to the snaclec family. Heterodimer; disulfide-linked. Expressed by the venom gland.

Its subcellular location is the secreted. In terms of biological role, interferes with one step of hemostasis (modulation of platelet aggregation, or coagulation cascade, for example). This Macrovipera lebetinus (Levantine viper) protein is Snaclec A14.